Consider the following 423-residue polypeptide: Glucose-1-phosphate adenylyltransferase (423 aa).

Residues Y107, G172, 187–188, and S205 contribute to the alpha-D-glucose 1-phosphate site; that span reads EK.

The protein belongs to the bacterial/plant glucose-1-phosphate adenylyltransferase family. In terms of assembly, homotetramer.

The catalysed reaction is alpha-D-glucose 1-phosphate + ATP + H(+) = ADP-alpha-D-glucose + diphosphate. The protein operates within glycan biosynthesis; glycogen biosynthesis. In terms of biological role, involved in the biosynthesis of ADP-glucose, a building block required for the elongation reactions to produce glycogen. Catalyzes the reaction between ATP and alpha-D-glucose 1-phosphate (G1P) to produce pyrophosphate and ADP-Glc. The chain is Glucose-1-phosphate adenylyltransferase from Cereibacter sphaeroides (strain ATCC 17025 / ATH 2.4.3) (Rhodobacter sphaeroides).